The sequence spans 319 residues: 7-methylguanosine phosphate-specific 5'-nucleotidase (319 aa).

The active-site Nucleophile is the aspartate 55. Mg(2+) contacts are provided by aspartate 55 and aspartate 57. Aspartate 57 (proton donor) is an active-site residue. Residue glutamate 103 participates in CMP binding. N(7)-methyl-GMP is bound by residues glutamate 103 and serine 124. Position 171-172 (171-172 (SA)) interacts with substrate. Aspartate 245 contributes to the Mg(2+) binding site.

The protein belongs to the pyrimidine 5'-nucleotidase family. As to quaternary structure, monomer. The cofactor is Mg(2+).

The enzyme catalyses N(7)-methyl-GMP + H2O = N(7)-methylguanosine + phosphate. It carries out the reaction CMP + H2O = cytidine + phosphate. It catalyses the reaction a ribonucleoside 5'-phosphate + H2O = a ribonucleoside + phosphate. With respect to regulation, inhibited by high levels of AMP. Its function is as follows. Specifically hydrolyzes 7-methylguanosine monophosphate (m(7)GMP) to 7-methylguanosine and inorganic phosphate. Also able to mediate hydrolysis of diphosphate (m(7)GDP) to 7-methylguanosine and 2 inorganic phosphate with lower activity. The specific activity for m(7)GMP may protect cells against undesired salvage of m(7)GMP and its incorporation into nucleic acids. Also has weak activity for CMP. UMP and purine nucleotides are poor substrates. This Drosophila melanogaster (Fruit fly) protein is 7-methylguanosine phosphate-specific 5'-nucleotidase.